Reading from the N-terminus, the 474-residue chain is Dihydrolipoyl dehydrogenase (474 aa).

Residues 36 to 44 (EAKDMGGTC), Lys53, and Gly119 contribute to the FAD site. Cysteines 44 and 49 form a disulfide. Residues 184–188 (GSGYI), Glu207, and 275–278 (ATGR) contribute to the NAD(+) site. The FAD site is built by Asp323 and Ala331. The active-site Proton acceptor is the His459.

This sequence belongs to the class-I pyridine nucleotide-disulfide oxidoreductase family. Homodimer. Requires FAD as cofactor.

It localises to the cell inner membrane. The enzyme catalyses N(6)-[(R)-dihydrolipoyl]-L-lysyl-[protein] + NAD(+) = N(6)-[(R)-lipoyl]-L-lysyl-[protein] + NADH + H(+). Its function is as follows. Lipoamide dehydrogenase is a component of the alpha-ketoacid dehydrogenase complexes. The polypeptide is Dihydrolipoyl dehydrogenase (lpdA) (Synechocystis sp. (strain ATCC 27184 / PCC 6803 / Kazusa)).